Consider the following 470-residue polypeptide: Glutamate--tRNA ligase 2 (470 aa).

The short motif at 10–20 is the 'HIGH' region element; the sequence is PSPTGFLHIGS. Positions 239–243 match the 'KMSKS' region motif; it reads KLSKR. Lys-242 provides a ligand contact to ATP.

This sequence belongs to the class-I aminoacyl-tRNA synthetase family. Glutamate--tRNA ligase type 1 subfamily. In terms of assembly, monomer.

Its subcellular location is the cytoplasm. The catalysed reaction is tRNA(Glu) + L-glutamate + ATP = L-glutamyl-tRNA(Glu) + AMP + diphosphate. Catalyzes the attachment of glutamate to tRNA(Glu) in a two-step reaction: glutamate is first activated by ATP to form Glu-AMP and then transferred to the acceptor end of tRNA(Glu). The polypeptide is Glutamate--tRNA ligase 2 (Rickettsia prowazekii (strain Madrid E)).